The following is a 237-amino-acid chain: tRNA1(Val) (adenine(37)-N6)-methyltransferase (237 aa).

This sequence belongs to the methyltransferase superfamily. tRNA (adenine-N(6)-)-methyltransferase family.

It is found in the cytoplasm. It catalyses the reaction adenosine(37) in tRNA1(Val) + S-adenosyl-L-methionine = N(6)-methyladenosine(37) in tRNA1(Val) + S-adenosyl-L-homocysteine + H(+). Specifically methylates the adenine in position 37 of tRNA(1)(Val) (anticodon cmo5UAC). The polypeptide is tRNA1(Val) (adenine(37)-N6)-methyltransferase (Bacteroides fragilis (strain YCH46)).